The chain runs to 342 residues: Endolytic peptidoglycan transglycosylase RlpA (342 aa).

A signal peptide spans 1–26 (MSKRVRSSLILPAVCGLGLAAVLLSS). A lipid anchor (N-palmitoyl cysteine) is attached at cysteine 27. Cysteine 27 is lipidated: S-diacylglycerol cysteine. The region spanning 261–342 (SLPADGLYLQ…LGQPTLVRPD (82 aa)) is the SPOR domain.

Belongs to the RlpA family.

It localises to the cell membrane. Lytic transglycosylase with a strong preference for naked glycan strands that lack stem peptides. This is Endolytic peptidoglycan transglycosylase RlpA from Pseudomonas aeruginosa (strain ATCC 15692 / DSM 22644 / CIP 104116 / JCM 14847 / LMG 12228 / 1C / PRS 101 / PAO1).